A 411-amino-acid polypeptide reads, in one-letter code: MLQQVPTRAFHVMAKPSGSDCNLNCDYCFYLEKQSLYREKPVTHMDDDTLEAYVRHYIAASEPQNEVAFTWQGGEPTLLGLAFYRRAVALQAKYGAGRKISNSFQTNGVLLDDEWCAFLAEHHFLVGLSLDGPPEIHNQYRVTKGGRPTHKLVMRALTLLQKHHVDYNVLVCVNRTSAQQPLQVYDFLCDAGVEFIQFIPVVERLADETTARDGLKLHAPGDIQGELTEWSVRPEEFGEFLVAIFDHWIKRDVGKIFVMNIEWAFANFVGAPGAVCHHQPTCGRSVIVEHNGDVYACDHYVYPQYRLGNMHQQTIAEMIDSPQQQAFGEDKFKQLPAQCRSCNVLKACWGGCPKHRFMLDASGKPGLNYLCAGYQRYFRHLPPYLKAMADLLAHGRPASDIMHAHLLVVSK.

The Radical SAM core domain maps to 3-250 (QQVPTRAFHV…LVAIFDHWIK (248 aa)). The [4Fe-4S] cluster site is built by Cys21 and Cys25. Tyr27 serves as a coordination point for S-adenosyl-L-methionine. Position 28 (Cys28) interacts with [4Fe-4S] cluster. Residues Gly74, Ser129, and Arg141 each coordinate S-adenosyl-L-methionine. [4Fe-4S] cluster contacts are provided by Cys276, Cys282, and Cys297. Asp298 (proton acceptor) is an active-site residue. [4Fe-4S] cluster-binding residues include Cys339, Cys342, Cys348, Cys352, and Cys371.

The protein belongs to the radical SAM superfamily. Anaerobic sulfatase-maturating enzyme family. It depends on [4Fe-4S] cluster as a cofactor.

This is Anaerobic sulfatase-maturating enzyme homolog AslB (aslB) from Escherichia coli (strain K12).